Here is a 180-residue protein sequence, read N- to C-terminus: Small ribosomal subunit protein uS4 (180 aa).

Residues 103-174 (RRLQTLVFKK…HPERMVIEEV (72 aa)) enclose the S4 RNA-binding domain.

It belongs to the universal ribosomal protein uS4 family. As to quaternary structure, part of the 30S ribosomal subunit. Contacts protein S5. The interaction surface between S4 and S5 is involved in control of translational fidelity.

One of the primary rRNA binding proteins, it binds directly to 16S rRNA where it nucleates assembly of the body of the 30S subunit. Functionally, with S5 and S12 plays an important role in translational accuracy. The protein is Small ribosomal subunit protein uS4 of Thermococcus sibiricus (strain DSM 12597 / MM 739).